A 283-amino-acid polypeptide reads, in one-letter code: Formamidopyrimidine-DNA glycosylase (283 aa).

Residue Pro2 is the Schiff-base intermediate with DNA of the active site. The Proton donor role is filled by Glu3. Lys60 acts as the Proton donor; for beta-elimination activity in catalysis. DNA contacts are provided by His100, Arg119, and Arg164. The FPG-type zinc finger occupies 249–283 (WVYNRAGEPCKVCGDVIQRIKLGGRSSHFCRQCQV). The Proton donor; for delta-elimination activity role is filled by Arg273.

This sequence belongs to the FPG family. Monomer. Zn(2+) serves as cofactor.

It carries out the reaction Hydrolysis of DNA containing ring-opened 7-methylguanine residues, releasing 2,6-diamino-4-hydroxy-5-(N-methyl)formamidopyrimidine.. It catalyses the reaction 2'-deoxyribonucleotide-(2'-deoxyribose 5'-phosphate)-2'-deoxyribonucleotide-DNA = a 3'-end 2'-deoxyribonucleotide-(2,3-dehydro-2,3-deoxyribose 5'-phosphate)-DNA + a 5'-end 5'-phospho-2'-deoxyribonucleoside-DNA + H(+). Its function is as follows. Involved in base excision repair of DNA damaged by oxidation or by mutagenic agents. Acts as a DNA glycosylase that recognizes and removes damaged bases. Has a preference for oxidized purines, such as 7,8-dihydro-8-oxoguanine (8-oxoG). Has AP (apurinic/apyrimidinic) lyase activity and introduces nicks in the DNA strand. Cleaves the DNA backbone by beta-delta elimination to generate a single-strand break at the site of the removed base with both 3'- and 5'-phosphates. This chain is Formamidopyrimidine-DNA glycosylase, found in Nostoc sp. (strain PCC 7120 / SAG 25.82 / UTEX 2576).